The chain runs to 227 residues: PKHD-type hydroxylase Veis_3084 (227 aa).

The segment at Asp27–Glu51 is disordered. Over residues Ala33–Pro47 the composition is skewed to polar residues. The region spanning Arg78–Ser179 is the Fe2OG dioxygenase domain. Residues His97, Asp99, and His160 each coordinate Fe cation. Arg170 is a binding site for 2-oxoglutarate.

The cofactor is Fe(2+). Requires L-ascorbate as cofactor.

This Verminephrobacter eiseniae (strain EF01-2) protein is PKHD-type hydroxylase Veis_3084.